The following is a 1012-amino-acid chain: Beta-alanine-activating enzyme (1012 aa).

ATP-binding positions include 177-185 (TTGTTGKPK), D411, R426, and K516.

The protein belongs to the ATP-dependent AMP-binding enzyme family.

Functionally, covalently binds beta-alanine in an ATP-dependent manner to form a thioester bond with its phosphopantetheine group and transfers it to an, as yet, unknown acceptor. May be required for a post-translational protein modification or for post-transcriptional modification of an RNA. This is Beta-alanine-activating enzyme from Drosophila melanogaster (Fruit fly).